A 479-amino-acid chain; its full sequence is ATP synthase subunit beta, chloroplastic (479 aa).

Residue 156–163 (GGAGVGKT) participates in ATP binding.

Belongs to the ATPase alpha/beta chains family. F-type ATPases have 2 components, CF(1) - the catalytic core - and CF(0) - the membrane proton channel. CF(1) has five subunits: alpha(3), beta(3), gamma(1), delta(1), epsilon(1). CF(0) has four main subunits: a(1), b(1), b'(1) and c(9-12).

The protein resides in the plastid. It is found in the chloroplast thylakoid membrane. It carries out the reaction ATP + H2O + 4 H(+)(in) = ADP + phosphate + 5 H(+)(out). Functionally, produces ATP from ADP in the presence of a proton gradient across the membrane. The catalytic sites are hosted primarily by the beta subunits. The sequence is that of ATP synthase subunit beta, chloroplastic from Trichomanes davallioides (Kilau fern).